Here is a 615-residue protein sequence, read N- to C-terminus: uncharacterized protein (615 aa).

The protein belongs to the mycobacterial PPE family.

This is an uncharacterized protein from Mycobacterium tuberculosis (strain CDC 1551 / Oshkosh).